The primary structure comprises 443 residues: Nitrate/nitrite binding protein NrtA (443 aa).

Residues 1-25 (MSQFSRRKFLLTAGGTAAAALWLNA) form the signal peptide. Cys-26 is lipidated: N-palmitoyl cysteine. A lipid anchor (S-diacylglycerol cysteine) is attached at Cys-26. Low complexity predominate over residues 31 to 46 (SSTDTTGSTSTPAPSG). Residues 31–52 (SSTDTTGSTSTPAPSGTSGGDA) form a disordered region. Trp-96, Gln-150, His-195, Gly-239, and Lys-268 together coordinate nitrate.

This sequence belongs to the CmpA/NrtA family. The complex is composed of two ATP-binding proteins (NrtC and NrtD), two transmembrane proteins (NrtB) and a solute-binding protein (NrtA). NrtA can form homotrimers. Post-translationally, the N-terminus is blocked.

The protein localises to the cell inner membrane. Functionally, part of the ABC transporter complex NrtABCD involved in nitrate uptake. The complex is probably also involved in nitrite transport. NrtA is the substrate-binding protein. Binds both nitrate and nitrite with high affinity. The chain is Nitrate/nitrite binding protein NrtA from Synechococcus elongatus (strain ATCC 33912 / PCC 7942 / FACHB-805) (Anacystis nidulans R2).